Consider the following 537-residue polypeptide: Glucose-6-phosphate isomerase (537 aa).

Catalysis depends on Glu-355, which acts as the Proton donor. Residues His-386 and Lys-501 contribute to the active site.

It belongs to the GPI family.

The protein localises to the cytoplasm. It carries out the reaction alpha-D-glucose 6-phosphate = beta-D-fructose 6-phosphate. The protein operates within carbohydrate biosynthesis; gluconeogenesis. It functions in the pathway carbohydrate degradation; glycolysis; D-glyceraldehyde 3-phosphate and glycerone phosphate from D-glucose: step 2/4. In terms of biological role, catalyzes the reversible isomerization of glucose-6-phosphate to fructose-6-phosphate. This chain is Glucose-6-phosphate isomerase, found in Protochlamydia amoebophila (strain UWE25).